Here is a 693-residue protein sequence, read N- to C-terminus: Periplasmic alpha-galactoside-binding protein (693 aa).

An N-terminal signal peptide occupies residues 1 to 20 (MKTHRLNMTASLLIGISAFA).

Belongs to the bacterial solute-binding protein 5 family.

It is found in the periplasm. Involved in the transport of alpha-galactosides. Required for the utilization of raffinose and melibiose. Probably acts as a periplasmic substrate-binding protein for a transport system. In Rhizobium meliloti (strain 1021) (Ensifer meliloti), this protein is Periplasmic alpha-galactoside-binding protein.